The sequence spans 528 residues: MAPVAFPTSFFLCLLLASGLAQAGRLLVVPMDGSHWFTMQMVVEKLIHRGHEVVVVIPEVSWQLGKSLNCTVKTYSISHTLEDLDREFKYLSYTQWKTPEHSIRSFLTGSARGFFELTFSHCRSLFNDKKLVEYLKQRFFDAVFLDPFDVCGLIVAKYFSLPSVIFARGVFCDYLEEGAQCPSLPSYVPRLFSKYTDTMTFKERVWNHLIYIEEHAFCSYFLRTAVEVASEILQTPVTMTDLFSPVSIWLLRTDFVLEFPRPVMPNMVFIGGINCLQKKSLSKEFEAYVNASGEHGIVVFSLGSMVSEIPEKKAMEIAEALGRIPQTVLWRYTGTRPSNLAKNTILVKWLPQNDLLGHPKTRAFITHSGSHGIYEGICNGVPMVMMPLFGDQMDNAKRMETRGAGVTLNVLEMTADDLENALKTVINNKSYKENIMRLSSLHKDRPIEPLDLAVFWVEYVMRHKGAPHLRPAAHDLTWYQYHSLDVIGFLLAIVLTVVFIVFKCCAYGCRKCFGGKGRVKKSHKSKTH.

An N-terminal signal peptide occupies residues 1-23 (MAPVAFPTSFFLCLLLASGLAQA). Asparagine 69 is a glycosylation site (N-linked (GlcNAc...) asparagine). At lysine 97 the chain carries N6-succinyllysine. Residues asparagine 290 and asparagine 428 are each glycosylated (N-linked (GlcNAc...) asparagine). Residues 486 to 506 (VIGFLLAIVLTVVFIVFKCCA) form a helical membrane-spanning segment.

Belongs to the UDP-glycosyltransferase family. In terms of assembly, homodimer. Homooligomer. Interacts with UGT1A1, UGT1A3, UGT1A4, UGT1A6, UGT1A7, UGT1A8 and UGT1A10 to form heterodimers. As to expression, highly expressed in liver and at lower levels in stomach and kidney.

It is found in the endoplasmic reticulum membrane. It carries out the reaction glucuronate acceptor + UDP-alpha-D-glucuronate = acceptor beta-D-glucuronoside + UDP + H(+). It catalyses the reaction 2-hydroxy-17beta-estradiol + UDP-alpha-D-glucuronate = 2-hydroxy-17beta-estradiol 3-O-(beta-D-glucuronate) + UDP + H(+). The enzyme catalyses 4-hydroxy-17beta-estradiol + UDP-alpha-D-glucuronate = 17beta-estradiol 4-O-(beta-D-glucuronate) + UDP + H(+). The catalysed reaction is 2-hydroxyestrone + UDP-alpha-D-glucuronate = 2-hydroxyestrone 3-O-(beta-D-glucuronate) + UDP + H(+). It carries out the reaction 4-hydroxyestrone + UDP-alpha-D-glucuronate = estrone 4-O-(beta-D-glucuronate) + UDP + H(+). It catalyses the reaction prunetin + UDP-alpha-D-glucuronate = prunetin-5-O-beta-D-glucuronide + UDP. The enzyme catalyses 8-iso-prostaglandin F2alpha + UDP-alpha-D-glucuronate = 8-iso-prostaglandin F2alpha-glucuronide + UDP + H(+). The catalysed reaction is 5-epi-5-F2t-IsoP + UDP-alpha-D-glucuronate = 5-epi-5-F2t-IsoP-glucuronide + UDP + H(+). It carries out the reaction (5Z,8Z,11Z,14Z)-eicosatetraenoate + UDP-alpha-D-glucuronate = O-[(5Z),(8Z),(11Z),(14Z)-eicosatetraenoyl]-beta-D-glucuronate + UDP. It catalyses the reaction 15-hydroxy-(5Z,8Z,11Z,13E)-eicosatetraenoate + UDP-alpha-D-glucuronate = 15-O-(beta-D-glucuronosyl)-(5Z,8Z,11Z,14Z)-eicosatetraenoate + UDP + H(+). The enzyme catalyses prostaglandin B1 + UDP-alpha-D-glucuronate = 15-O-(beta-D-glucuronosyl)-prostaglandin B1 + UDP + H(+). The catalysed reaction is (E)-ferulate + UDP-alpha-D-glucuronate = (E)-4-O-(beta-D-glucuronosyl)-ferulate + UDP + H(+). It carries out the reaction (E)-ferulate + UDP-alpha-D-glucuronate = (E)-ferulic acid beta-D-glucuronate ester + UDP. It catalyses the reaction candesartan + UDP-alpha-D-glucuronate = candesartan O-beta-D-glucuronoside + UDP. The enzyme catalyses SN-38 + UDP-alpha-D-glucuronate = SN-38 O-beta-D-glucuronide + UDP + H(+). The catalysed reaction is mycophenolate + UDP-alpha-D-glucuronate = mycophenolate 7-O-beta-D-glucuronide + UDP + H(+). Functionally, UDP-glucuronosyltransferase (UGT) that catalyzes phase II biotransformation reactions in which lipophilic substrates are conjugated with glucuronic acid to increase the metabolite's water solubility, thereby facilitating excretion into either the urine or bile. Essential for the elimination and detoxification of drugs, xenobiotics and endogenous compounds. Catalyzes the glucuronidation of endogenous estrogen hormones such as estradiol and estrone. Involved in the glucuronidation of arachidonic acid (AA) and AA-derived eicosanoids including 15-HETE, PGB1 and F2-isoprostanes (8-iso-PGF2alpha and 5-epi-5-F2t-IsoP). Glucuronates the phytochemical ferulic acid efficently at both the phenolic or the carboxylic acid group. Also catalyzes the glucuronidation of the isoflavones genistein, daidzein, glycitein, formononetin, biochanin A and prunetin, which are phytoestrogens with anticancer and cardiovascular properties. Involved in the glucuronidation of the AGTR1 angiotensin receptor antagonist caderastan, a drug which can inhibit the effect of angiotensin II. Involved in the biotransformation of 7-ethyl-10-hydroxycamptothecin (SN-38), the pharmacologically active metabolite of the anticancer drug irinotecan. Also metabolizes mycophenolate, an immunosuppressive agent. The polypeptide is UDP-glucuronosyltransferase 1A9 (Mus musculus (Mouse)).